The primary structure comprises 199 residues: Small ribosomal subunit protein uS4c (199 aa).

Positions 1–24 are enriched in basic and acidic residues; that stretch reads MESDQSKVESDQSKMESDQSKVES. The interval 1-35 is disordered; it reads MESDQSKVESDQSKMESDQSKVESDQSISQSTSKK. The region spanning 84–146 is the S4 RNA-binding domain; the sequence is MRLDNIIFRL…QKSQELIKRN (63 aa).

This sequence belongs to the universal ribosomal protein uS4 family. In terms of assembly, part of the 30S ribosomal subunit. Contacts protein S5. The interaction surface between S4 and S5 is involved in control of translational fidelity.

Its subcellular location is the plastid. The protein localises to the chloroplast. Functionally, one of the primary rRNA binding proteins, it binds directly to 16S rRNA where it nucleates assembly of the body of the 30S subunit. In terms of biological role, with S5 and S12 plays an important role in translational accuracy. This Psilotum nudum (Whisk fern) protein is Small ribosomal subunit protein uS4c (rps4).